The chain runs to 156 residues: Transcription elongation factor GreA (156 aa).

The stretch at 1-32 (MKKVRLTREGYEKLKKELEDLKRKFMYEISER) forms a coiled coil.

Belongs to the GreA/GreB family.

Functionally, necessary for efficient RNA polymerase transcription elongation past template-encoded arresting sites. The arresting sites in DNA have the property of trapping a certain fraction of elongating RNA polymerases that pass through, resulting in locked ternary complexes. Cleavage of the nascent transcript by cleavage factors such as GreA or GreB allows the resumption of elongation from the new 3'terminus. GreA releases sequences of 2 to 3 nucleotides. This chain is Transcription elongation factor GreA, found in Thermotoga sp. (strain RQ2).